Here is a 321-residue protein sequence, read N- to C-terminus: MSQMVLVADIGGTHARFALMGPDGEAVNPVVLRCADYDGPAPAIKAYLAEHAGGVAPKGGAFAVASVIDGDRIELTNSPWRFSIAETRQAVGLQRLEVVNDFTAVALSVRHLKPEHLMSVGGGMPEAGLPIAVLGPGTGLGVSALIPSASGEWTALATEGGHVTMAAATEREARILDRLRTQFDHVSAERVLSGQGLVNLYQAVAALSGHQAVFSTPDVITKRGLDGSCPVSREAVEVFFAMMGTVAGNLALSLGAKGGVFIAGGILPRMAEAFRLSSFRTRFEAHGRFQPYLAAIPTWLITHPLPAFVGLAGLVTDPKNA.

Position 8-13 (8-13 (ADIGGT)) interacts with ATP.

Belongs to the bacterial glucokinase family.

Its subcellular location is the cytoplasm. The catalysed reaction is D-glucose + ATP = D-glucose 6-phosphate + ADP + H(+). In Paramagnetospirillum magneticum (strain ATCC 700264 / AMB-1) (Magnetospirillum magneticum), this protein is Glucokinase.